We begin with the raw amino-acid sequence, 206 residues long: 2-phospho-L-lactate guanylyltransferase (206 aa).

The protein belongs to the CofC family. In terms of assembly, homodimer.

It carries out the reaction (2S)-2-phospholactate + GTP + H(+) = (2S)-lactyl-2-diphospho-5'-guanosine + diphosphate. It functions in the pathway cofactor biosynthesis; coenzyme F420 biosynthesis. Functionally, guanylyltransferase that catalyzes the activation of (2S)-2-phospholactate (2-PL) as (2S)-lactyl-2-diphospho-5'-guanosine, via the condensation of 2-PL with GTP. It is involved in the biosynthesis of coenzyme F420, a hydride carrier cofactor. This Archaeoglobus profundus (strain DSM 5631 / JCM 9629 / NBRC 100127 / Av18) protein is 2-phospho-L-lactate guanylyltransferase.